The primary structure comprises 586 residues: Major facilitator superfamily domain-containing protein 6-like (586 aa).

The next 2 membrane-spanning stretches (helical) occupy residues 50–70 (TLMGTKHLIAAFWAPVCAFLA) and 78–98 (ALLIGSLLGSVGASLLMVLVP). A disordered region spans residues 133 to 160 (AQESASSHPAKRTAEVEMPGFRNPPGES). 9 helical membrane-spanning segments follow: residues 246 to 266 (FILSLGSVAFWELLTAPLEQV), 287 to 307 (LWVWRLLGMSAGVCGITALVG), 326 to 346 (GYSVVSTLALLVSIAFPIPIC), 361 to 381 (IVGGDPHLILLASTTVLVGAI), 400 to 420 (ELVMGFSVALSLLGEILLHPF), 433 to 455 (LVGLGLSCLAGQLLYYSFLWSWW), 456 to 476 (SVLPIQILSAISNRALWWAVG), 499 to 519 (FYGSGCSLGSFVGGFVVMRFS), and 521 to 541 (AVLYQACCVALLLWLALLLSI).

It belongs to the major facilitator superfamily. MFSD6 family.

Its subcellular location is the membrane. The polypeptide is Major facilitator superfamily domain-containing protein 6-like (MFSD6L) (Homo sapiens (Human)).